Reading from the N-terminus, the 213-residue chain is Na(+)-translocating NADH-quinone reductase subunit D (213 aa).

6 helical membrane passes run 22–42, 43–63, 77–97, 101–121, 131–151, and 183–203; these read LIAILGICSALAVTTTVTTAL, TMGFAVSFVTGCSSFVVSLLR, IIISLFVILIDQFLKAFFFTI, LSVFVGLIITNCIVMGRAESM, FLDGLGSGLGYGWVLVCISII, and LGLMVLAPSAFFLLGIMIWIV.

Belongs to the NqrDE/RnfAE family. Composed of six subunits; NqrA, NqrB, NqrC, NqrD, NqrE and NqrF.

The protein resides in the cell inner membrane. It carries out the reaction a ubiquinone + n Na(+)(in) + NADH + H(+) = a ubiquinol + n Na(+)(out) + NAD(+). Functionally, NQR complex catalyzes the reduction of ubiquinone-1 to ubiquinol by two successive reactions, coupled with the transport of Na(+) ions from the cytoplasm to the periplasm. NqrA to NqrE are probably involved in the second step, the conversion of ubisemiquinone to ubiquinol. This Chlamydia trachomatis serovar A (strain ATCC VR-571B / DSM 19440 / HAR-13) protein is Na(+)-translocating NADH-quinone reductase subunit D.